The primary structure comprises 533 residues: D-2-hydroxyglutarate dehydrogenase, mitochondrial (533 aa).

The transit peptide at 1–55 (MGLFQKCSRLSLRSSYMWSVCPQYSIAVTARETPDRALIVHWTQHRDVHNSRRLG) directs the protein to the mitochondrion. The region spanning 107 to 286 (VQGSSDVLLR…TAVSILCPRK (180 aa)) is the FAD-binding PCMH-type domain. The (R)-2-hydroxyglutarate site is built by R397, T401, and K412. R397 provides a ligand contact to (R)-lactate. (R)-malate is bound by residues R397, T401, and K412. Zn(2+) contacts are provided by H445 and H452. N454 serves as a coordination point for (R)-2-hydroxyglutarate. Zn(2+) is bound at residue E486. Position 487 (H487) interacts with (R)-2-hydroxyglutarate. Residue H487 participates in (R)-lactate binding. A (R)-malate-binding site is contributed by H487.

Belongs to the FAD-binding oxidoreductase/transferase type 4 family. FAD is required as a cofactor.

It is found in the mitochondrion. It carries out the reaction (R)-2-hydroxyglutarate + A = 2-oxoglutarate + AH2. It catalyses the reaction (R)-malate + A = oxaloacetate + AH2. In terms of biological role, catalyzes the oxidation of D-2-hydroxyglutarate (D-2-HG) to alpha-ketoglutarate. Also catalyzes the oxidation of other D-2-hydroxyacids, such as D-malate (D-MAL) and D-lactate (D-LAC). Exhibits high activities towards D-2-HG and D-MAL but a very weak activity towards D-LAC. The protein is D-2-hydroxyglutarate dehydrogenase, mitochondrial (d2hgdh) of Danio rerio (Zebrafish).